The following is a 139-amino-acid chain: Actin-depolymerizing factor 3 (139 aa).

The 133-residue stretch at G7 to R139 folds into the ADF-H domain.

The protein belongs to the actin-binding proteins ADF family. In terms of tissue distribution, expressed in all tissues except pollen.

The protein localises to the cytoplasm. Functionally, actin-depolymerizing protein. Severs actin filaments (F-actin) and binds to actin monomers. In Zea mays (Maize), this protein is Actin-depolymerizing factor 3 (ADF3).